Consider the following 122-residue polypeptide: Lithostathine (122 aa).

The first 26 residues, 1-26 (MLPSMSLPSLXWMLLSCLMLLSQVQG), serve as a signal peptide directing secretion. A propeptide spanning residues 27 to 37 (EDSPADTPSAR) is cleaved from the precursor. The C-type lectin domain maps to 38-122 (ISCPKGSMAY…LEPNAGGWEW (85 aa)). An intrachain disulfide couples Cys-40 to Cys-51.

In terms of assembly, cleaved to give an A chain and a B chain joined by a disulfide bond. In pancreatic acinar cells.

It localises to the secreted. Functionally, might act as an inhibitor of spontaneous calcium carbonate precipitation. The sequence is that of Lithostathine (PTP) from Sus scrofa (Pig).